Consider the following 519-residue polypeptide: Membrane-bound lytic murein transglycosylase F (519 aa).

The first 32 residues, 1–32 (MKKLKLNYLLIGVVTLLLAVALWPAIPWSGKA), serve as a signal peptide directing secretion. Residues 33–269 (DNRIAAIQAR…RLEEKYLGHG (237 aa)) form a non-LT domain region. Positions 270 to 519 (NDFDYVDTRS…PNTLSPVSPR (250 aa)) are LT domain. Glu314 is an active-site residue. The segment at 495–519 (PFSQAGAGGKTHSALPNTLSPVSPR) is disordered. Residues 508 to 519 (ALPNTLSPVSPR) are compositionally biased toward polar residues.

In the N-terminal section; belongs to the bacterial solute-binding protein 3 family. This sequence in the C-terminal section; belongs to the transglycosylase Slt family.

The protein localises to the cell outer membrane. The enzyme catalyses Exolytic cleavage of the (1-&gt;4)-beta-glycosidic linkage between N-acetylmuramic acid (MurNAc) and N-acetylglucosamine (GlcNAc) residues in peptidoglycan, from either the reducing or the non-reducing ends of the peptidoglycan chains, with concomitant formation of a 1,6-anhydrobond in the MurNAc residue.. Murein-degrading enzyme that degrades murein glycan strands and insoluble, high-molecular weight murein sacculi, with the concomitant formation of a 1,6-anhydromuramoyl product. Lytic transglycosylases (LTs) play an integral role in the metabolism of the peptidoglycan (PG) sacculus. Their lytic action creates space within the PG sacculus to allow for its expansion as well as for the insertion of various structures such as secretion systems and flagella. The protein is Membrane-bound lytic murein transglycosylase F of Cronobacter sakazakii (strain ATCC BAA-894) (Enterobacter sakazakii).